A 437-amino-acid chain; its full sequence is MNFTTQMDAAKKGIITKEMKVVSQKEGVDVEILRELVAEGKIVIPANKNHKSLDAQGVGQGLKTKINVNLGISKDCANIDMELEKVKTAIEMKAEAIMDLSSYGKTEEFRKRIVEMCSVMIGTVPIYDAVGFYDKELSDISPEEFLAVVEKHAQDGVDFMTIHAGINRETAKVFKRNKRLTNIVSRGGSLLYAWMELNNKENPFYEYYDKVLDICARYDVTISLGDACRPGSINDSTDASQIKELITLGELTKRAWEKNVQVIVEGPGHMSLNEIAANMQLEKKLCHGAPFYVLGPLVTDIAPGYDHITSAIGGAIAAANGADFLCYVTPAEHLRLPNLEDMKEGIIASKIAAHAADVSNNIKGAKEWDYKMSEARKELNWEKMFDLAIDPEKARRYRRESTPEHEDTCTMCGKMCAVRNMNKVMEGKNINILREED.

Substrate is bound by residues asparagine 69, methionine 98, tyrosine 127, histidine 163, 185–187, 226–229, and glutamate 265; these read SRG and DACR. Zn(2+) is bound at residue histidine 269. A substrate-binding site is contributed by tyrosine 292. Residue histidine 333 participates in Zn(2+) binding. [4Fe-4S] cluster is bound by residues cysteine 409, cysteine 412, and cysteine 416.

This sequence belongs to the ThiC family. [4Fe-4S] cluster is required as a cofactor.

It carries out the reaction 5-amino-1-(5-phospho-beta-D-ribosyl)imidazole + S-adenosyl-L-methionine = 4-amino-2-methyl-5-(phosphooxymethyl)pyrimidine + CO + 5'-deoxyadenosine + formate + L-methionine + 3 H(+). It functions in the pathway cofactor biosynthesis; thiamine diphosphate biosynthesis. In terms of biological role, catalyzes the synthesis of the hydroxymethylpyrimidine phosphate (HMP-P) moiety of thiamine from aminoimidazole ribotide (AIR) in a radical S-adenosyl-L-methionine (SAM)-dependent reaction. The protein is Phosphomethylpyrimidine synthase of Clostridium kluyveri (strain NBRC 12016).